Consider the following 927-residue polypeptide: Bifunctional glutamine synthetase adenylyltransferase/adenylyl-removing enzyme (927 aa).

Residues 1–428 are adenylyl removase; the sequence is MTMTDASDLL…AQFDQVFADK (428 aa). The adenylyl transferase stretch occupies residues 438 to 927; sequence DQAAGCIWSG…AALWARVFGA (490 aa).

This sequence belongs to the GlnE family. Mg(2+) serves as cofactor.

The catalysed reaction is [glutamine synthetase]-O(4)-(5'-adenylyl)-L-tyrosine + phosphate = [glutamine synthetase]-L-tyrosine + ADP. It catalyses the reaction [glutamine synthetase]-L-tyrosine + ATP = [glutamine synthetase]-O(4)-(5'-adenylyl)-L-tyrosine + diphosphate. Its function is as follows. Involved in the regulation of glutamine synthetase GlnA, a key enzyme in the process to assimilate ammonia. When cellular nitrogen levels are high, the C-terminal adenylyl transferase (AT) inactivates GlnA by covalent transfer of an adenylyl group from ATP to specific tyrosine residue of GlnA, thus reducing its activity. Conversely, when nitrogen levels are low, the N-terminal adenylyl removase (AR) activates GlnA by removing the adenylyl group by phosphorolysis, increasing its activity. The regulatory region of GlnE binds the signal transduction protein PII (GlnB) which indicates the nitrogen status of the cell. In Burkholderia pseudomallei (strain K96243), this protein is Bifunctional glutamine synthetase adenylyltransferase/adenylyl-removing enzyme.